Here is a 315-residue protein sequence, read N- to C-terminus: Glucokinase-like protein CC_3167 (315 aa).

The protein belongs to the bacterial glucokinase family.

The protein is Glucokinase-like protein CC_3167 of Caulobacter vibrioides (strain ATCC 19089 / CIP 103742 / CB 15) (Caulobacter crescentus).